Reading from the N-terminus, the 278-residue chain is Nudix hydrolase 2 (278 aa).

Residues 110 to 242 (SHRVGIGAFV…ELLRYMTDIC (133 aa)) enclose the Nudix hydrolase domain. Residues 147–168 (GVVNEGEDIHDGSVREVKEETG) carry the Nudix box motif. Glu-162 provides a ligand contact to Mg(2+). The active-site Proton acceptor is the Glu-165. Glu-166 is a Mg(2+) binding site.

It belongs to the Nudix hydrolase family. Requires Mg(2+) as cofactor. The cofactor is Mn(2+). In terms of tissue distribution, expressed in roots, stems and leaves.

The catalysed reaction is ADP-D-ribose + H2O = D-ribose 5-phosphate + AMP + 2 H(+). It carries out the reaction NAD(+) + H2O = beta-nicotinamide D-ribonucleotide + AMP + 2 H(+). The enzyme catalyses NADH + H2O = reduced beta-nicotinamide D-ribonucleotide + AMP + 2 H(+). Its function is as follows. Probably mediates the hydrolysis of some nucleoside diphosphate derivatives. In vitro, it can use both NADH and ADP-ribose as substrates; however the relevance of such substrates in vivo is unclear. Confers tolerance to oxidative stress. The chain is Nudix hydrolase 2 from Arabidopsis thaliana (Mouse-ear cress).